We begin with the raw amino-acid sequence, 1579 residues long: DNA-directed RNA polymerase subunit beta' (1579 aa).

Cysteine 65, cysteine 67, cysteine 80, and cysteine 83 together coordinate Zn(2+). 3 residues coordinate Mg(2+): aspartate 601, aspartate 603, and aspartate 605. The Zn(2+) site is built by cysteine 938, cysteine 1012, cysteine 1019, and cysteine 1022.

This sequence belongs to the RNA polymerase beta' chain family. In terms of assembly, the RNAP catalytic core consists of 2 alpha, 1 beta, 1 beta' and 1 omega subunit. When a sigma factor is associated with the core the holoenzyme is formed, which can initiate transcription. It depends on Mg(2+) as a cofactor. Zn(2+) serves as cofactor.

The enzyme catalyses RNA(n) + a ribonucleoside 5'-triphosphate = RNA(n+1) + diphosphate. Its function is as follows. DNA-dependent RNA polymerase catalyzes the transcription of DNA into RNA using the four ribonucleoside triphosphates as substrates. The polypeptide is DNA-directed RNA polymerase subunit beta' (Sulfurihydrogenibium sp. (strain YO3AOP1)).